Consider the following 227-residue polypeptide: 2,3-bisphosphoglycerate-dependent phosphoglycerate mutase (227 aa).

Substrate-binding positions include 7-14, 20-21, Arg59, 86-89, Lys97, 113-114, and 182-183; these read RHGFSEWN, TG, ERHY, RR, and GN. Catalysis depends on His8, which acts as the Tele-phosphohistidine intermediate. Catalysis depends on Glu86, which acts as the Proton donor/acceptor.

It belongs to the phosphoglycerate mutase family. BPG-dependent PGAM subfamily. As to quaternary structure, homodimer.

It carries out the reaction (2R)-2-phosphoglycerate = (2R)-3-phosphoglycerate. The protein operates within carbohydrate degradation; glycolysis; pyruvate from D-glyceraldehyde 3-phosphate: step 3/5. Its function is as follows. Catalyzes the interconversion of 2-phosphoglycerate and 3-phosphoglycerate. The chain is 2,3-bisphosphoglycerate-dependent phosphoglycerate mutase from Haemophilus influenzae (strain 86-028NP).